The primary structure comprises 602 residues: Threonine--tRNA ligase (602 aa).

The interval D208–P499 is catalytic. Zn(2+) is bound by residues C300, H351, and H476.

Belongs to the class-II aminoacyl-tRNA synthetase family. Homodimer. Zn(2+) is required as a cofactor.

The protein resides in the cytoplasm. The catalysed reaction is tRNA(Thr) + L-threonine + ATP = L-threonyl-tRNA(Thr) + AMP + diphosphate + H(+). Catalyzes the attachment of threonine to tRNA(Thr) in a two-step reaction: L-threonine is first activated by ATP to form Thr-AMP and then transferred to the acceptor end of tRNA(Thr). Also edits incorrectly charged L-seryl-tRNA(Thr). The protein is Threonine--tRNA ligase of Campylobacter jejuni subsp. jejuni serotype O:6 (strain 81116 / NCTC 11828).